The sequence spans 29 residues: Thrombin-like enzyme collinein-2 (29 aa).

In terms of assembly, monomer. In terms of tissue distribution, expressed by the venom gland.

The protein resides in the secreted. Thrombin-like snake venom serine protease. In Crotalus durissus collilineatus (Brazilian rattlesnake), this protein is Thrombin-like enzyme collinein-2.